The primary structure comprises 430 residues: Enolase (430 aa).

Q167 provides a ligand contact to (2R)-2-phosphoglycerate. E209 acts as the Proton donor in catalysis. 3 residues coordinate Mg(2+): D246, E287, and D314. Residues K339, R368, and S369 each coordinate (2R)-2-phosphoglycerate. K339 serves as the catalytic Proton acceptor.

This sequence belongs to the enolase family. It depends on Mg(2+) as a cofactor.

The protein resides in the cytoplasm. Its subcellular location is the secreted. It localises to the cell surface. The enzyme catalyses (2R)-2-phosphoglycerate = phosphoenolpyruvate + H2O. It functions in the pathway carbohydrate degradation; glycolysis; pyruvate from D-glyceraldehyde 3-phosphate: step 4/5. Catalyzes the reversible conversion of 2-phosphoglycerate (2-PG) into phosphoenolpyruvate (PEP). It is essential for the degradation of carbohydrates via glycolysis. This Synechococcus sp. (strain ATCC 27144 / PCC 6301 / SAUG 1402/1) (Anacystis nidulans) protein is Enolase.